Consider the following 331-residue polypeptide: CRISPR-associated endonuclease Cas1 (331 aa).

Positions 158, 223, and 238 each coordinate Mn(2+).

The protein belongs to the CRISPR-associated endonuclease Cas1 family. As to quaternary structure, homodimer, forms a heterotetramer with a Cas2 homodimer. The cofactor is Mg(2+). Mn(2+) serves as cofactor.

Its function is as follows. CRISPR (clustered regularly interspaced short palindromic repeat), is an adaptive immune system that provides protection against mobile genetic elements (viruses, transposable elements and conjugative plasmids). CRISPR clusters contain spacers, sequences complementary to antecedent mobile elements, and target invading nucleic acids. CRISPR clusters are transcribed and processed into CRISPR RNA (crRNA). Acts as a dsDNA endonuclease. Involved in the integration of spacer DNA into the CRISPR cassette. Plasmid targeted by CRISPR locus P1 transform wild-type cells very poorly. The protein is CRISPR-associated endonuclease Cas1 of Haloferax volcanii (strain ATCC 29605 / DSM 3757 / JCM 8879 / NBRC 14742 / NCIMB 2012 / VKM B-1768 / DS2) (Halobacterium volcanii).